Consider the following 286-residue polypeptide: Release factor glutamine methyltransferase (286 aa).

Residues Asp-136 and Asn-179 each contribute to the S-adenosyl-L-methionine site. Residue 179–182 (NPPY) participates in substrate binding.

It belongs to the protein N5-glutamine methyltransferase family. PrmC subfamily.

The enzyme catalyses L-glutaminyl-[peptide chain release factor] + S-adenosyl-L-methionine = N(5)-methyl-L-glutaminyl-[peptide chain release factor] + S-adenosyl-L-homocysteine + H(+). Methylates the class 1 translation termination release factors RF1/PrfA and RF2/PrfB on the glutamine residue of the universally conserved GGQ motif. This is Release factor glutamine methyltransferase from Borreliella burgdorferi (strain ATCC 35210 / DSM 4680 / CIP 102532 / B31) (Borrelia burgdorferi).